The sequence spans 459 residues: tRNA modification GTPase MnmE (459 aa).

3 residues coordinate (6S)-5-formyl-5,6,7,8-tetrahydrofolate: arginine 20, glutamate 85, and arginine 124. The TrmE-type G domain occupies 221 to 380; sequence GLSTVIIGRP…LEMAIQSLFF (160 aa). Asparagine 231 serves as a coordination point for K(+). GTP contacts are provided by residues 231 to 236, 250 to 256, and 275 to 278; these read NVGKSS, TDIPGTT, and DTAG. Residue serine 235 participates in Mg(2+) binding. Positions 250, 252, and 255 each coordinate K(+). Threonine 256 serves as a coordination point for Mg(2+). Lysine 459 lines the (6S)-5-formyl-5,6,7,8-tetrahydrofolate pocket.

The protein belongs to the TRAFAC class TrmE-Era-EngA-EngB-Septin-like GTPase superfamily. TrmE GTPase family. As to quaternary structure, homodimer. Heterotetramer of two MnmE and two MnmG subunits. K(+) is required as a cofactor.

It is found in the cytoplasm. Exhibits a very high intrinsic GTPase hydrolysis rate. Involved in the addition of a carboxymethylaminomethyl (cmnm) group at the wobble position (U34) of certain tRNAs, forming tRNA-cmnm(5)s(2)U34. In Bacillus pumilus (strain SAFR-032), this protein is tRNA modification GTPase MnmE.